Reading from the N-terminus, the 486-residue chain is Sensor protein PhoQ (486 aa).

Over 1-16 the chain is Cytoplasmic; the sequence is MKKLLRLFFPLSLRVR. Residues 17–37 traverse the membrane as a helical segment; it reads FLLATAAVVLVLSLAYGMVAL. Topologically, residues 38–194 are periplasmic; sequence IGYSVSFDKT…LKSSYMVWSW (157 aa). A divalent metal cation is bound by residues Asp151 and Asp152. Residues 195 to 215 traverse the membrane as a helical segment; that stretch reads FIYVLSANLLLVIPLLWVAAW. In terms of domain architecture, HAMP spans 215–266; it reads WWSLRPIEALAKEVRELEEHNRELLNPATTRELTSLVRNLNRLLKSERERYD. Residues 216–486 lie on the Cytoplasmic side of the membrane; the sequence is WSLRPIEALA…GRQHSAPKDE (271 aa). The region spanning 274–480 is the Histidine kinase domain; the sequence is DLTHSLKTPL…RMEVIFGRQH (207 aa). A Phosphohistidine; by autocatalysis modification is found at His277. Asn385 is a Mg(2+) binding site. ATP contacts are provided by residues 385–393, 415–420, and 434–446; these read NVLDNACKY, DDGPGI, and RVDT…GVGL. Residue Gln442 coordinates Mg(2+).

As to quaternary structure, homodimer; probably dimerizes via the cytoplasmic domain. Probably interacts with MgrB in the periplasm, altering its activity and that of downstream effector PhoP.

Its subcellular location is the cell inner membrane. It carries out the reaction ATP + protein L-histidine = ADP + protein N-phospho-L-histidine.. With respect to regulation, acetyl-CoA acts as a non-competitive inhibitor of the PhoQ autokinase activity. Feedback inhibited by MgrB, which seems to bind PhoQ, altering its activity and that of downstream effector PhoP. Member of the two-component regulatory system PhoP/PhoQ involved in adaptation to low Mg(2+) environments and the control of acid resistance genes. In low periplasmic Mg(2+), PhoQ functions as a membrane-associated protein kinase that undergoes autophosphorylation and subsequently transfers the phosphate to PhoP, resulting in the expression of PhoP-activated genes (PAG) and repression of PhoP-repressed genes (PRG). In high periplasmic Mg(2+), acts as a protein phosphatase that dephosphorylates phospho-PhoP, resulting in the repression of PAG and may lead to expression of some PRG. PhoP-regulated transcription is redox-sensitive, being activated when the periplasm becomes more reducing (deletion of dsbA/dsbB, or treatment with dithiothreitol). MgrB acts between DsbA/DsbB and PhoP/PhoQ in this pathway; the 2 periplasmic Cys residues of MgrB are required for its action on PhoQ, which then acts on PhoP. Mediates magnesium influx to the cytosol by activation of mgtA. Promotes expression of the two-component regulatory system rstA/rstB and transcription of the hemL, mgrB, nagA, slyB, vboR and yrbL genes. In Escherichia coli (strain K12), this protein is Sensor protein PhoQ (phoQ).